The sequence spans 527 residues: Putative adhesin P1-like protein MPN_500 (527 aa).

Disordered stretches follow at residues 1 to 26, 76 to 148, 248 to 269, and 468 to 527; these read MDDI…GSRS, GWRN…LTNY, ASGS…PEQS, and FGTD…VSGH. The span at 9-26 shows a compositional bias: low complexity; sequence TSAGSSSGTSTNTSGSRS. The segment covering 82-95 has biased composition (polar residues); that stretch reads TTSGSTGNANDTKF. Low complexity predominate over residues 108 to 117; that stretch reads SSGTNTSAGN. A compositionally biased stretch (polar residues) spans 128 to 148; the sequence is QNGQVKTSVQEATSGDNLTNY. A compositionally biased stretch (low complexity) spans 248-262; sequence ASGSGSNTTSSPGIG. A compositionally biased stretch (polar residues) spans 468–495; the sequence is FGTDHSTQPQPQSLKTTTPVFGRSSGNL. A compositionally biased stretch (gly residues) spans 500–513; the sequence is SGGGAGGGSSGSGQ.

The protein belongs to the adhesin P1 family.

The chain is Putative adhesin P1-like protein MPN_500 from Mycoplasma pneumoniae (strain ATCC 29342 / M129 / Subtype 1) (Mycoplasmoides pneumoniae).